Consider the following 333-residue polypeptide: Mitochondrial 2-oxoglutarate/malate carrier protein (333 aa).

Solcar repeat units lie at residues 29–127 (FRLI…LFER), 136–227 (PGFL…SKQF), and 236–325 (DNIL…MNKA). 6 helical membrane-spanning segments follow: residues 30-61 (RLIA…VQPL), 102-120 (GLSA…RLGI), 138-159 (FLLK…GTPA), 202-221 (GCIP…LASY), 241-259 (HFCA…SMPV), and 300-319 (GFTP…FIFL).

This sequence belongs to the mitochondrial carrier (TC 2.A.29) family. Interacts with SMIM26.

The protein localises to the membrane. It catalyses the reaction (S)-malate(in) + 2-oxoglutarate(out) = (S)-malate(out) + 2-oxoglutarate(in). The catalysed reaction is malonate(in) + 2-oxoglutarate(out) = malonate(out) + 2-oxoglutarate(in). The enzyme catalyses succinate(in) + 2-oxoglutarate(out) = succinate(out) + 2-oxoglutarate(in). It carries out the reaction maleate(in) + 2-oxoglutarate(out) = maleate(out) + 2-oxoglutarate(in). It catalyses the reaction oxaloacetate(in) + 2-oxoglutarate(out) = oxaloacetate(out) + 2-oxoglutarate(in). In terms of biological role, catalyzes the transport of 2-oxoglutarate (alpha-oxoglutarate) across the inner mitochondrial membrane in an electroneutral exchange for malate. Can also exchange 2-oxoglutarate for other dicarboxylic acids such as malonate, succinate, maleate and oxaloacetate, although with lower affinity. Contributes to several metabolic processes, including the malate-aspartate shuttle, the oxoglutarate/isocitrate shuttle, in gluconeogenesis from lactate, and in nitrogen metabolism. Maintains mitochondrial fusion and fission events, and the organization and morphology of cristae. Involved in the regulation of apoptosis. Helps protect from cytotoxic-induced apoptosis by modulating glutathione levels in mitochondria. The sequence is that of Mitochondrial 2-oxoglutarate/malate carrier protein (SLC25A11) from Sus scrofa (Pig).